A 366-amino-acid chain; its full sequence is MQSSLPQFTFKWPKGPEAIILTGTFDDWKGTLPMVKDPSGAFEITLPVTFDSPSSKFYFKFIVDGQWLPSKDYKVNIDEGVENNFITEEDVIKQRENGSSTLVPESTGLAVSKNAPLIEPEAEKRAKKLRKFKIKRVIKTNKQTGERSIFSQEVVELPDSEDETQQVNKTGKNADGLSGTTTIIENNVGVNEEKAIKPYEENHPKVNLVKSEGYVTDGLGKTQSSESRLYELSAEDLEKEEEEEDEDKGGGKDTSTSADAEASEDQNKEPLSKSAKFEKPEEKVPVSSITSHAKETSVKPTGKVATETQTYETKQGAPTAAAKKIEAKKATRPSKPKGTKETPNKGVQKNPAKNGGFFKKLAQLLK.

Residues 159 to 180 (DSEDETQQVNKTGKNADGLSGT) are disordered. Serine 160 is modified (phosphoserine). Position 216 is a phosphothreonine (threonine 216). A disordered region spans residues 217-366 (DGLGKTQSSE…FFKKLAQLLK (150 aa)). Residues 233–247 (SAEDLEKEEEEEDED) show a composition bias toward acidic residues. Basic and acidic residues predominate over residues 265–284 (DQNKEPLSKSAKFEKPEEKV). Serine 288 carries the post-translational modification Phosphoserine. A Glycyl lysine isopeptide (Lys-Gly) (interchain with G-Cter in ubiquitin) cross-link involves residue lysine 314.

This sequence belongs to the CRP1/MDG1 family.

It is found in the cell membrane. Involved in G-protein mediated signal transduction and in the regulation of polarized cell growth in pheromone-induced cells. The chain is Signal transduction protein MDG1 (MDG1) from Saccharomyces cerevisiae (strain YJM789) (Baker's yeast).